We begin with the raw amino-acid sequence, 313 residues long: 4-hydroxy-3-methylbut-2-enyl diphosphate reductase (313 aa).

A [4Fe-4S] cluster-binding site is contributed by C13. 2 residues coordinate (2E)-4-hydroxy-3-methylbut-2-enyl diphosphate: H41 and H75. Positions 41 and 75 each coordinate dimethylallyl diphosphate. H41 and H75 together coordinate isopentenyl diphosphate. C97 serves as a coordination point for [4Fe-4S] cluster. H125 serves as a coordination point for (2E)-4-hydroxy-3-methylbut-2-enyl diphosphate. Position 125 (H125) interacts with dimethylallyl diphosphate. H125 contacts isopentenyl diphosphate. E127 acts as the Proton donor in catalysis. T168 serves as a coordination point for (2E)-4-hydroxy-3-methylbut-2-enyl diphosphate. A [4Fe-4S] cluster-binding site is contributed by C218. (2E)-4-hydroxy-3-methylbut-2-enyl diphosphate contacts are provided by S246, S247, N248, and S295. S246, S247, N248, and S295 together coordinate dimethylallyl diphosphate. Isopentenyl diphosphate-binding residues include S246, S247, N248, and S295.

It belongs to the IspH family. [4Fe-4S] cluster serves as cofactor.

It carries out the reaction isopentenyl diphosphate + 2 oxidized [2Fe-2S]-[ferredoxin] + H2O = (2E)-4-hydroxy-3-methylbut-2-enyl diphosphate + 2 reduced [2Fe-2S]-[ferredoxin] + 2 H(+). The enzyme catalyses dimethylallyl diphosphate + 2 oxidized [2Fe-2S]-[ferredoxin] + H2O = (2E)-4-hydroxy-3-methylbut-2-enyl diphosphate + 2 reduced [2Fe-2S]-[ferredoxin] + 2 H(+). The protein operates within isoprenoid biosynthesis; dimethylallyl diphosphate biosynthesis; dimethylallyl diphosphate from (2E)-4-hydroxy-3-methylbutenyl diphosphate: step 1/1. It functions in the pathway isoprenoid biosynthesis; isopentenyl diphosphate biosynthesis via DXP pathway; isopentenyl diphosphate from 1-deoxy-D-xylulose 5-phosphate: step 6/6. Functionally, catalyzes the conversion of 1-hydroxy-2-methyl-2-(E)-butenyl 4-diphosphate (HMBPP) into a mixture of isopentenyl diphosphate (IPP) and dimethylallyl diphosphate (DMAPP). Acts in the terminal step of the DOXP/MEP pathway for isoprenoid precursor biosynthesis. This is 4-hydroxy-3-methylbut-2-enyl diphosphate reductase from Chlorobium phaeovibrioides (strain DSM 265 / 1930) (Prosthecochloris vibrioformis (strain DSM 265)).